The chain runs to 466 residues: Asparagine--tRNA ligase (466 aa).

This sequence belongs to the class-II aminoacyl-tRNA synthetase family. As to quaternary structure, homodimer.

Its subcellular location is the cytoplasm. The catalysed reaction is tRNA(Asn) + L-asparagine + ATP = L-asparaginyl-tRNA(Asn) + AMP + diphosphate + H(+). The polypeptide is Asparagine--tRNA ligase (Shewanella pealeana (strain ATCC 700345 / ANG-SQ1)).